Consider the following 449-residue polypeptide: Glycine receptor subunit alpha-2 (449 aa).

A signal peptide spans 1–27 (MTRPSVKLLTTLLACLMEMLNFRVSSG). Over 28–255 (KDPDLLSSSS…FHLERQMGYY (228 aa)) the chain is Extracellular. A glycan (N-linked (GlcNAc...) asparagine) is linked at Asn70. Positions 97 and 161 each coordinate glycine. Arg97 is a binding site for strychnine. Cys170 and Cys184 are joined by a disulfide. 2 residues coordinate Zn(2+): Glu224 and Asp226. Cys230 and Cys241 form a disulfide bridge. Glycine is bound at residue Thr236. Residue His247 coordinates Zn(2+). Residues 256–276 (LIQMYIPSLLIVILSWVSFWI) form a helical membrane-spanning segment. Topologically, residues 277 to 282 (NMDAAP) are cytoplasmic. Residues 283 to 302 (ARVALGITTVLTMTTQSSGS) form a helical membrane-spanning segment. The Extracellular portion of the chain corresponds to 303–313 (RASLPKVSYVK). Residues 314 to 334 (AIDIWMAVCLLFVFAALLEYA) form a helical membrane-spanning segment. At 335–420 (GVNFVSRQQK…RAKRIDTISR (86 aa)) the chain is on the cytoplasmic side. Residues 421 to 441 (AAFPLAFLIFNVFYWITYKII) traverse the membrane as a helical segment. Residues 442 to 449 (RHESARKD) lie on the Extracellular side of the membrane.

This sequence belongs to the ligand-gated ion channel (TC 1.A.9) family.

The protein resides in the postsynaptic cell membrane. The protein localises to the synapse. It is found in the cell membrane. Its subcellular location is the cell projection. The catalysed reaction is chloride(in) = chloride(out). Its activity is regulated as follows. Channel opening is triggered by extracellular glycine. Channel opening is also triggered by taurine and beta-alanine. Inhibited by strychnine. Functionally, subunit of heteromeric glycine-gated chloride channels. Plays a role in synaptic plasticity. Contributes to the generation of inhibitory postsynaptic currents, and is involved in the down-regulation of neuronal excitability. In Danio rerio (Zebrafish), this protein is Glycine receptor subunit alpha-2 (glra2).